A 292-amino-acid polypeptide reads, in one-letter code: ATP synthase gamma chain (292 aa).

This sequence belongs to the ATPase gamma chain family. As to quaternary structure, F-type ATPases have 2 components, CF(1) - the catalytic core - and CF(0) - the membrane proton channel. CF(1) has five subunits: alpha(3), beta(3), gamma(1), delta(1), epsilon(1). CF(0) has three main subunits: a, b and c.

It is found in the cell inner membrane. Its function is as follows. Produces ATP from ADP in the presence of a proton gradient across the membrane. The gamma chain is believed to be important in regulating ATPase activity and the flow of protons through the CF(0) complex. This chain is ATP synthase gamma chain, found in Nautilia profundicola (strain ATCC BAA-1463 / DSM 18972 / AmH).